We begin with the raw amino-acid sequence, 612 residues long: Pentatricopeptide repeat-containing protein At4g14050, mitochondrial (612 aa).

Residues 1 to 24 (MLIPHYLHQLQLCARNRTLTTAKA) constitute a mitochondrion transit peptide. 11 PPR repeats span residues 37 to 71 (CCPLANTLVNVYGKCGAASHALQVFDEMPHRDHIA), 72 to 103 (WASVLTALNQANLSGKTLSVFSSVGSSSGLRP), 104 to 138 (DDFVFSALVKACANLGSIDHGRQVHCHFIVSEYAN), 139 to 169 (DEVVKSSLVDMYAKCGLLNSAKAVFDSIRVK), 170 to 204 (NTISWTAMVSGYAKSGRKEEALELFRILPVKNLYS), 205 to 235 (WTALISGFVQSGKGLEAFSVFTEMRRERVDI), 237 to 271 (DPLVLSSIVGACANLAASIAGRQVHGLVIALGFDS), 272 to 302 (CVFISNALIDMYAKCSDVIAAKDIFSRMRHR), 303 to 337 (DVVSWTSLIVGMAQHGQAEKALALYDDMVSHGVKP), 338 to 373 (NEVTFVGLIYACSHVGFVEKGRELFQSMTKDYGIRP), and 374 to 408 (SLQHYTCLLDLLGRSGLLDEAENLIHTMPFPPDEP). A type E motif region spans residues 409–485 (TWAALLSACK…DPGHSSVEVR (77 aa)). Residues 486 to 516 (KETEVFYAGETSHPLKEDIFRLLKKLEEEMR) form a type E(+) motif region. Positions 518–612 (RNGYVPDTSW…GGKCSCNDFW (95 aa)) are type DYW motif.

The protein belongs to the PPR family. PCMP-H subfamily. As to quaternary structure, interacts with MORF8/RIP1 and MORF1/RIP8.

It localises to the mitochondrion. Involved in C-to-U editing of mitochondrial RNA. Required specifically for editing the mitochondrial NAD4, MT-CYB/COB and RPL16 transcripts. The protein is Pentatricopeptide repeat-containing protein At4g14050, mitochondrial (PCMP-H13) of Arabidopsis thaliana (Mouse-ear cress).